The chain runs to 905 residues: Isoleucine--tRNA ligase (905 aa).

Positions 56–66 (PYANGNIHMGT) match the 'HIGH' region motif. Glutamate 563 is an L-isoleucyl-5'-AMP binding site. The short motif at 604-608 (KMSKS) is the 'KMSKS' region element. Residue lysine 607 participates in ATP binding.

This sequence belongs to the class-I aminoacyl-tRNA synthetase family. IleS type 1 subfamily. Monomer.

It is found in the cytoplasm. It carries out the reaction tRNA(Ile) + L-isoleucine + ATP = L-isoleucyl-tRNA(Ile) + AMP + diphosphate. Functionally, catalyzes the attachment of isoleucine to tRNA(Ile). As IleRS can inadvertently accommodate and process structurally similar amino acids such as valine, to avoid such errors it has two additional distinct tRNA(Ile)-dependent editing activities. One activity is designated as 'pretransfer' editing and involves the hydrolysis of activated Val-AMP. The other activity is designated 'posttransfer' editing and involves deacylation of mischarged Val-tRNA(Ile). This chain is Isoleucine--tRNA ligase, found in Pelagibacter ubique (strain HTCC1062).